A 195-amino-acid chain; its full sequence is Adenylate kinase (195 aa).

11–16 (GAGKGT) serves as a coordination point for ATP. The NMP stretch occupies residues 31–60 (STGDIFRAAVRNQTPLGQQVQAYLDSGRLV). AMP contacts are provided by residues Thr-32, Arg-37, 58-60 (RLV), 86-89 (GFPR), and Gln-93. Residues 127-137 (LRAEKESRKDD) form an LID region. Arg-128 contributes to the ATP binding site. Residues Arg-134 and Arg-145 each contribute to the AMP site. Gln-173 lines the ATP pocket.

This sequence belongs to the adenylate kinase family. In terms of assembly, monomer.

The protein resides in the cytoplasm. The enzyme catalyses AMP + ATP = 2 ADP. The protein operates within purine metabolism; AMP biosynthesis via salvage pathway; AMP from ADP: step 1/1. Functionally, catalyzes the reversible transfer of the terminal phosphate group between ATP and AMP. Plays an important role in cellular energy homeostasis and in adenine nucleotide metabolism. This Cyanothece sp. (strain PCC 7425 / ATCC 29141) protein is Adenylate kinase.